A 371-amino-acid chain; its full sequence is AA9 family lytic polysaccharide monooxygenase B (371 aa).

Positions 1 to 25 (MSIAKIAGVVLGSAALVAGHGYVSG) are cleaved as a signal peptide. Residues histidine 20 and histidine 104 each coordinate Cu(2+). Intrachain disulfides connect cysteine 74/cysteine 194 and cysteine 115/cysteine 119. Asparagine 154 carries N-linked (GlcNAc...) asparagine glycosylation. Histidine 180 and glutamine 189 together coordinate O2. Tyrosine 191 contributes to the Cu(2+) binding site. The tract at residues 304–332 (HVQATSSSAAASTPTASSGASSGSGSSSS) is disordered. Positions 307–332 (ATSSSAAASTPTASSGASSGSGSSSS) are enriched in low complexity.

The protein belongs to the polysaccharide monooxygenase AA9 family. Cu(2+) is required as a cofactor.

The protein localises to the secreted. The enzyme catalyses [(1-&gt;4)-beta-D-glucosyl]n+m + reduced acceptor + O2 = 4-dehydro-beta-D-glucosyl-[(1-&gt;4)-beta-D-glucosyl]n-1 + [(1-&gt;4)-beta-D-glucosyl]m + acceptor + H2O.. Its function is as follows. Lytic polysaccharide monooxygenase (LPMO) that depolymerizes crystalline and amorphous polysaccharides via the oxidation of scissile alpha- or beta-(1-4)-glycosidic bonds, yielding C1 and C4 oxidation products. Catalysis by LPMOs requires the reduction of the active-site copper from Cu(II) to Cu(I) by a reducing agent and H(2)O(2) or O(2) as a cosubstrate. In addition to cellulose, also cleaves the beta-(1!4)-glucan backbone of tamarind xyloglucan, irrespective of substitutions which contrasts with AA9A xyloglucan cleavage activity. This Aspergillus tamarii protein is AA9 family lytic polysaccharide monooxygenase B.